Consider the following 319-residue polypeptide: Large ribosomal subunit protein uL10 (319 aa).

Positions 289–319 are disordered; the sequence is EQKSAAPAAKEEAPKEDSEESDEDMGFGLFD.

The protein belongs to the universal ribosomal protein uL10 family. P0 forms a pentameric complex by interaction with dimers of P1 and P2. Post-translationally, phosphorylated.

Its subcellular location is the nucleus. The protein localises to the cytoplasm. Its function is as follows. Ribosomal protein P0 is the functional equivalent of E.coli protein L10. This is Large ribosomal subunit protein uL10 (rplp0) from Danio rerio (Zebrafish).